A 982-amino-acid chain; its full sequence is Presequence protease, mitochondrial (982 aa).

The N-terminal 7 residues, 1-7 (MFQIRNY), are a transit peptide targeting the mitochondrion. A Zn(2+)-binding site is contributed by histidine 84. Residue glutamate 87 is the Proton acceptor of the active site. Histidine 88 contacts Zn(2+). Glutamate 160 is a catalytic residue. Residue glutamate 185 participates in Zn(2+) binding.

This sequence belongs to the peptidase M16 family. PreP subfamily. In terms of assembly, monomer and homodimer; homodimerization is induced by binding of the substrate. Requires Zn(2+) as cofactor.

The protein resides in the mitochondrion intermembrane space. It localises to the mitochondrion matrix. Functionally, degrades mitochondrial transit peptides after their cleavage in the intermembrane space or in the matrix, and presequence peptides; clearance of these peptides is required to keep the presequence processing machinery running. Preferentially cleaves the N-terminal side of paired basic amino acid residues. Also degrades other unstructured peptides. May function as an ATP-dependent peptidase as opposed to a metalloendopeptidase. The protein is Presequence protease, mitochondrial (CYM1) of Kluyveromyces lactis (strain ATCC 8585 / CBS 2359 / DSM 70799 / NBRC 1267 / NRRL Y-1140 / WM37) (Yeast).